Reading from the N-terminus, the 253-residue chain is 3-deoxy-manno-octulosonate cytidylyltransferase (253 aa).

It belongs to the KdsB family.

It is found in the cytoplasm. The catalysed reaction is 3-deoxy-alpha-D-manno-oct-2-ulosonate + CTP = CMP-3-deoxy-beta-D-manno-octulosonate + diphosphate. It participates in nucleotide-sugar biosynthesis; CMP-3-deoxy-D-manno-octulosonate biosynthesis; CMP-3-deoxy-D-manno-octulosonate from 3-deoxy-D-manno-octulosonate and CTP: step 1/1. The protein operates within bacterial outer membrane biogenesis; lipopolysaccharide biosynthesis. Its function is as follows. Activates KDO (a required 8-carbon sugar) for incorporation into bacterial lipopolysaccharide in Gram-negative bacteria. The polypeptide is 3-deoxy-manno-octulosonate cytidylyltransferase (Neisseria meningitidis serogroup C (strain 053442)).